Here is a 398-residue protein sequence, read N- to C-terminus: 1-deoxy-D-xylulose 5-phosphate reductoisomerase (398 aa).

NADPH is bound by residues T10, G11, S12, I13, G36, N38, and N124. Position 125 (K125) interacts with 1-deoxy-D-xylulose 5-phosphate. Residue E126 participates in NADPH binding. Residue D150 coordinates Mn(2+). 1-deoxy-D-xylulose 5-phosphate is bound by residues S151, E152, S176, and H199. Residue E152 participates in Mn(2+) binding. G205 is an NADPH binding site. The 1-deoxy-D-xylulose 5-phosphate site is built by S212, N217, K218, and E221. E221 contacts Mn(2+).

This sequence belongs to the DXR family. It depends on Mg(2+) as a cofactor. Mn(2+) serves as cofactor.

It carries out the reaction 2-C-methyl-D-erythritol 4-phosphate + NADP(+) = 1-deoxy-D-xylulose 5-phosphate + NADPH + H(+). Its pathway is isoprenoid biosynthesis; isopentenyl diphosphate biosynthesis via DXP pathway; isopentenyl diphosphate from 1-deoxy-D-xylulose 5-phosphate: step 1/6. Functionally, catalyzes the NADPH-dependent rearrangement and reduction of 1-deoxy-D-xylulose-5-phosphate (DXP) to 2-C-methyl-D-erythritol 4-phosphate (MEP). The sequence is that of 1-deoxy-D-xylulose 5-phosphate reductoisomerase from Nostoc punctiforme (strain ATCC 29133 / PCC 73102).